A 480-amino-acid polypeptide reads, in one-letter code: Type II methyltransferase M.NspV (480 aa).

It belongs to the methyltransferase superfamily.

In terms of biological role, a gamma subtype methylase that recognizes the double-stranded sequence 5'-TTCGAA-3', and methylates it on an unknown base to protect it against the NspV endonuclease. The sequence is that of Type II methyltransferase M.NspV from Nostoc sp. (strain ATCC 29411 / PCC 7524).